The chain runs to 188 residues: ATP synthase subunit delta (188 aa).

Belongs to the ATPase delta chain family. F-type ATPases have 2 components, F(1) - the catalytic core - and F(0) - the membrane proton channel. F(1) has five subunits: alpha(3), beta(3), gamma(1), delta(1), epsilon(1). F(0) has three main subunits: a(1), b(2) and c(10-14). The alpha and beta chains form an alternating ring which encloses part of the gamma chain. F(1) is attached to F(0) by a central stalk formed by the gamma and epsilon chains, while a peripheral stalk is formed by the delta and b chains.

It is found in the cell inner membrane. Its function is as follows. F(1)F(0) ATP synthase produces ATP from ADP in the presence of a proton or sodium gradient. F-type ATPases consist of two structural domains, F(1) containing the extramembraneous catalytic core and F(0) containing the membrane proton channel, linked together by a central stalk and a peripheral stalk. During catalysis, ATP synthesis in the catalytic domain of F(1) is coupled via a rotary mechanism of the central stalk subunits to proton translocation. In terms of biological role, this protein is part of the stalk that links CF(0) to CF(1). It either transmits conformational changes from CF(0) to CF(1) or is implicated in proton conduction. The protein is ATP synthase subunit delta of Rhizobium rhizogenes (strain K84 / ATCC BAA-868) (Agrobacterium radiobacter).